The chain runs to 660 residues: DNA ligase (660 aa).

NAD(+) is bound by residues 33-37, 82-83, and Glu110; these read DFVYD and SL. Lys112 acts as the N6-AMP-lysine intermediate in catalysis. Arg133, Glu167, Lys281, and Lys305 together coordinate NAD(+). Residues Cys396, Cys399, Cys412, and Cys417 each coordinate Zn(2+). Residues 583–660 enclose the BRCT domain; sequence DENRLLAGKK…SFEDIKSYLN (78 aa).

It belongs to the NAD-dependent DNA ligase family. LigA subfamily. The cofactor is Mg(2+). Mn(2+) serves as cofactor.

The catalysed reaction is NAD(+) + (deoxyribonucleotide)n-3'-hydroxyl + 5'-phospho-(deoxyribonucleotide)m = (deoxyribonucleotide)n+m + AMP + beta-nicotinamide D-nucleotide.. In terms of biological role, DNA ligase that catalyzes the formation of phosphodiester linkages between 5'-phosphoryl and 3'-hydroxyl groups in double-stranded DNA using NAD as a coenzyme and as the energy source for the reaction. It is essential for DNA replication and repair of damaged DNA. In Borrelia garinii subsp. bavariensis (strain ATCC BAA-2496 / DSM 23469 / PBi) (Borreliella bavariensis), this protein is DNA ligase.